The sequence spans 79 residues: MDTKQAVLDILNELTGEDLSDQMDENIFENGLLDSMATVQMLLELQDKCGVTAPVSEFHREDWDTPNKIIAKVESLRNE.

Positions 1 to 77 (MDTKQAVLDI…KIIAKVESLR (77 aa)) constitute a Carrier domain. S35 carries the O-(pantetheine 4'-phosphoryl)serine modification.

This sequence belongs to the DltC family. 4'-phosphopantetheine is transferred from CoA to a specific serine of apo-DCP.

Its subcellular location is the cytoplasm. It participates in cell wall biogenesis; lipoteichoic acid biosynthesis. In terms of biological role, carrier protein involved in the D-alanylation of lipoteichoic acid (LTA). The loading of thioester-linked D-alanine onto DltC is catalyzed by D-alanine--D-alanyl carrier protein ligase DltA. The DltC-carried D-alanyl group is further transferred to cell membrane phosphatidylglycerol (PG) by forming an ester bond, probably catalyzed by DltD. D-alanylation of LTA plays an important role in modulating the properties of the cell wall in Gram-positive bacteria, influencing the net charge of the cell wall. The sequence is that of D-alanyl carrier protein from Lactobacillus gasseri (strain ATCC 33323 / DSM 20243 / BCRC 14619 / CIP 102991 / JCM 1131 / KCTC 3163 / NCIMB 11718 / NCTC 13722 / AM63).